A 139-amino-acid polypeptide reads, in one-letter code: Cytochrome c-551 (139 aa).

The signal sequence occupies residues 1-20 (MTRTLAVVLAMTFSAAPVFA). Heme c contacts are provided by C34, C37, H38, and M116.

It belongs to the cytochrome c family. Binds 1 heme c group covalently per subunit.

The chain is Cytochrome c-551 from Roseobacter denitrificans (strain ATCC 33942 / OCh 114) (Erythrobacter sp. (strain OCh 114)).